Reading from the N-terminus, the 136-residue chain is Invertebrate-type lysozyme (136 aa).

A signal peptide spans 1-11 (METVSVEEGLD). One can recognise an I-type lysozyme domain in the interval 14 to 130 (PGMVSQKCLL…WELLQKIPGC (117 aa)). 7 disulfides stabilise this stretch: C21–C98, C24–C130, C26–C33, C38–C47, C60–C80, C70–C76, and C94–C112. E29 functions as the Proton donor in the catalytic mechanism. The active-site Nucleophile is the D41. Residue 53 to 59 (KQPYWID) participates in substrate binding. N-linked (GlcNAc...) asparagine glycosylation occurs at N75. Substrate is bound by residues Y84, Y92, 105-107 (HNG), and K119.

Homodimer in its autoinhibited state. Active as monomer.

The protein localises to the secreted. The catalysed reaction is Hydrolysis of (1-&gt;4)-beta-linkages between N-acetylmuramic acid and N-acetyl-D-glucosamine residues in a peptidoglycan and between N-acetyl-D-glucosamine residues in chitodextrins.. Chitinase activity is activated by high salt concentrations which cause the release of the monomer from the autoinhibited homodimer. Bacteriolytic activity against Gram-positive bacterium M.luteus and thereby probably protects against bacterial infection. Also has chitinase activity. May act as an ispopeptidase, cleaving isopeptide bonds between the side chains of Lys and Gln residues in proteins or in the cross-linking peptide of peptidoglycan in bacterial cell walls. This Ruditapes philippinarum (Japanese carpet shell) protein is Invertebrate-type lysozyme.